Here is a 420-residue protein sequence, read N- to C-terminus: Serine/threonine transporter SstT (420 aa).

9 consecutive transmembrane segments (helical) span residues 14-34 (IMIGIVIGTTLGFLVPEWTFI), 40-60 (LFVGALKAIAPILVFVLIIAS), 71-91 (YVGSILVVYLLATFLAAVVAV), 172-192 (ITTVVQMIIGIAPIGILGLVF), 210-230 (LLLLIGTMAVVALVVYPAIVF), 283-303 (IPLGATINMGGAAITITIMTL), 309-329 (LGMSVPIYLALLLSIIAAVSA), 332-352 (ASGIAGGSLLLIPLACSLFGI), and 356-376 (IAMQVVGVGFIVGVVQDSIET).

This sequence belongs to the dicarboxylate/amino acid:cation symporter (DAACS) (TC 2.A.23) family.

The protein resides in the cell membrane. The enzyme catalyses L-serine(in) + Na(+)(in) = L-serine(out) + Na(+)(out). It catalyses the reaction L-threonine(in) + Na(+)(in) = L-threonine(out) + Na(+)(out). Involved in the import of serine and threonine into the cell, with the concomitant import of sodium (symport system). This Enterococcus faecalis (strain ATCC 700802 / V583) protein is Serine/threonine transporter SstT.